Consider the following 495-residue polypeptide: Dipeptide and tripeptide permease B (495 aa).

Residues 1 to 16 (MDNKVSILNQPKPFKM) are Cytoplasmic-facing. Residues 17–37 (IFFIELWERFGYYGLQGILAV) form a helical membrane-spanning segment. Residues 38–50 (YFVDKLGFSMQDS) lie on the Periplasmic side of the membrane. The chain crosses the membrane as a helical span at residues 51 to 71 (FVTFGAFAALVYGLVSVGGYV). Over 72–80 (GDYVLGTKR) the chain is Cytoplasmic. The chain crosses the membrane as a helical span at residues 81–101 (TMVFGAVVLALGYFLMGFSIL). Topologically, residues 102–104 (NPN) are periplasmic. The chain crosses the membrane as a helical span at residues 105 to 125 (FIYVALGAIAVGNGLFKANPS). Residues 126 to 144 (SLLAKCYEKGDSRLDGAFT) are Cytoplasmic-facing. The helical transmembrane segment at 145–165 (LYYMSINIGSLVSLSISPVIA) threads the bilayer. Residues 166–170 (NNYGY) lie on the Periplasmic side of the membrane. The helical transmembrane segment at 171–191 (EYAFIICGLGLIASLFSYFSL) threads the bilayer. The Cytoplasmic portion of the chain corresponds to 192–209 (RSTVQGIGSEPDALPLNK). Residues 210–230 (TKALIVLIGTIASTLVCAWLL) form a helical membrane-spanning segment. Position 231 (Gln231) is a topological domain, periplasmic. Residues 232–252 (NIMMANLALGLIGVGVVGFFL) traverse the membrane as a helical segment. Over 253 to 265 (KETFKEVGEQRNK) the chain is Cytoplasmic. The helical transmembrane segment at 266–286 (MIVAFILMLQAIIFYVLYAQM) threads the bilayer. Topologically, residues 287 to 309 (PTSLNFFAINNVHSELFGMDINP) are periplasmic. Residues 310–330 (VSLQALNPFWVIFCSPILAYL) traverse the membrane as a helical segment. At 331–348 (YTYYGNQNKDLSMPGKFT) the chain is on the cytoplasmic side. The chain crosses the membrane as a helical span at residues 349-369 (VGMFMCAFGFLSVAAAGNWFA). At 370-373 (DQAG) the chain is on the periplasmic side. A helical membrane pass occupies residues 374-394 (MVSVWWMVLVYLFQSLGELMI). Over 395-409 (SGLGLAMVASLVPQR) the chain is Cytoplasmic. Residues 410–430 (LMGFTMGAWFLTQAASFIIGG) form a helical membrane-spanning segment. Topologically, residues 431-454 (YVATFSATPEHLTDPLDTLPVYTE) are periplasmic. The chain crosses the membrane as a helical span at residues 455 to 475 (LFQNIGFVTLAVAIVMAITAP). Residues 476-495 (KLNKMMTSSQPEDAELVEQP) lie on the Cytoplasmic side of the membrane.

Belongs to the major facilitator superfamily. Proton-dependent oligopeptide transporter (POT/PTR) (TC 2.A.17) family. DtpB subfamily.

It localises to the cell inner membrane. In terms of biological role, proton-dependent permease that transports di- and tripeptides. This Aliivibrio fischeri (strain MJ11) (Vibrio fischeri) protein is Dipeptide and tripeptide permease B.